A 284-amino-acid chain; its full sequence is Putative xyloglucan endotransglucosylase/hydrolase protein 13 (284 aa).

Residues 1-24 (MAAFTTKQSLLLLSLLLLISLSAG) form the signal peptide. The 190-residue stretch at 25 to 214 (SFYDNFDITW…WTNAPFSASY (190 aa)) folds into the GH16 domain. The active-site Nucleophile is E100. The Proton donor role is filled by E104. E104 is a binding site for xyloglucan. N108 carries N-linked (GlcNAc...) asparagine glycosylation. Xyloglucan contacts are provided by residues 117–119 (HTN), 127–129 (NRE), 193–194 (DW), and G198. Disulfide bonds link C223/C234 and C267/C281. Residue R272 participates in xyloglucan binding.

Belongs to the glycosyl hydrolase 16 family. XTH group 2 subfamily. In terms of processing, contains at least one intrachain disulfide bond essential for its enzymatic activity.

The protein resides in the secreted. It localises to the cell wall. Its subcellular location is the extracellular space. The protein localises to the apoplast. The catalysed reaction is breaks a beta-(1-&gt;4) bond in the backbone of a xyloglucan and transfers the xyloglucanyl segment on to O-4 of the non-reducing terminal glucose residue of an acceptor, which can be a xyloglucan or an oligosaccharide of xyloglucan.. May catalyze xyloglucan endohydrolysis (XEH) and/or endotransglycosylation (XET). Cleaves and religates xyloglucan polymers, an essential constituent of the primary cell wall, and thereby participates in cell wall construction of growing tissues. In Arabidopsis thaliana (Mouse-ear cress), this protein is Putative xyloglucan endotransglucosylase/hydrolase protein 13 (XTH13).